The sequence spans 311 residues: Pyrimidine-specific ribonucleoside hydrolase RihA (311 aa).

The active site involves histidine 240.

Belongs to the IUNH family. RihA subfamily.

Functionally, hydrolyzes with equal efficiency cytidine or uridine to ribose and cytosine or uracil, respectively. In Escherichia coli O157:H7, this protein is Pyrimidine-specific ribonucleoside hydrolase RihA.